Consider the following 220-residue polypeptide: Probable GTP-binding protein EngB (220 aa).

The EngB-type G domain occupies Glu26–Pro200. GTP is bound by residues Gly34–Ser41, Gly61–Leu65, Asp79–Gly82, Thr146–Asp149, and Phe179–Ser181. Mg(2+) is bound by residues Ser41 and Thr63.

This sequence belongs to the TRAFAC class TrmE-Era-EngA-EngB-Septin-like GTPase superfamily. EngB GTPase family. The cofactor is Mg(2+).

Functionally, necessary for normal cell division and for the maintenance of normal septation. In Vibrio cholerae serotype O1 (strain ATCC 39315 / El Tor Inaba N16961), this protein is Probable GTP-binding protein EngB.